We begin with the raw amino-acid sequence, 91 residues long: MEKNQKINNAAYDQLNKDADRILQLIKVQMDNLTLPQCPLYEEVLDTQMFGLQKEVDFAVQLGLVDREVGKDLMLRLEKELSKLHDAFTNV.

It belongs to the UPF0358 family.

The polypeptide is UPF0358 protein SSP1677 (Staphylococcus saprophyticus subsp. saprophyticus (strain ATCC 15305 / DSM 20229 / NCIMB 8711 / NCTC 7292 / S-41)).